Reading from the N-terminus, the 350-residue chain is 3-isopropylmalate dehydrogenase (350 aa).

Residue 76–87 (GPKWDNAPKRPE) participates in NAD(+) binding. Substrate-binding residues include Arg94, Arg104, Arg132, and Asp217. The Mg(2+) site is built by Asp217, Asp241, and Asp245. 275–287 (GSAPDIANQNIAN) contributes to the NAD(+) binding site.

Belongs to the isocitrate and isopropylmalate dehydrogenases family. LeuB type 1 subfamily. Homodimer. Requires Mg(2+) as cofactor. It depends on Mn(2+) as a cofactor.

The protein resides in the cytoplasm. The catalysed reaction is (2R,3S)-3-isopropylmalate + NAD(+) = 4-methyl-2-oxopentanoate + CO2 + NADH. It functions in the pathway amino-acid biosynthesis; L-leucine biosynthesis; L-leucine from 3-methyl-2-oxobutanoate: step 3/4. Functionally, catalyzes the oxidation of 3-carboxy-2-hydroxy-4-methylpentanoate (3-isopropylmalate) to 3-carboxy-4-methyl-2-oxopentanoate. The product decarboxylates to 4-methyl-2 oxopentanoate. This chain is 3-isopropylmalate dehydrogenase, found in Listeria innocua serovar 6a (strain ATCC BAA-680 / CLIP 11262).